Reading from the N-terminus, the 240-residue chain is Protein CDV3 homolog A (240 aa).

Residues 1–15 (MAEPQEKSLDDFFAK) show a composition bias toward basic and acidic residues. A disordered region spans residues 1–204 (MAEPQEKSLD…TESRREKEME (204 aa)). At Ala-2 the chain carries N-acetylalanine. A compositionally biased stretch (low complexity) spans 27–52 (SGSAAGSRGSARPPDGAPSSSSSMSG). Residues 57–73 (VKKEKSGKSDNPDQLQE) show a composition bias toward basic and acidic residues. Composition is skewed to polar residues over residues 127–141 (DKSS…QAQA) and 181–192 (SDTQFPSLQATA). Basic and acidic residues predominate over residues 193 to 204 (KHTESRREKEME).

It belongs to the CDV3 family.

Its subcellular location is the cytoplasm. The polypeptide is Protein CDV3 homolog A (cdv3-a) (Xenopus laevis (African clawed frog)).